A 426-amino-acid polypeptide reads, in one-letter code: Enolase (426 aa).

Q165 contacts (2R)-2-phosphoglycerate. The active-site Proton donor is E207. Positions 244, 285, and 312 each coordinate Mg(2+). Residues K337, R366, S367, and K388 each contribute to the (2R)-2-phosphoglycerate site. K337 acts as the Proton acceptor in catalysis.

This sequence belongs to the enolase family. Mg(2+) serves as cofactor.

It localises to the cytoplasm. Its subcellular location is the secreted. It is found in the cell surface. It catalyses the reaction (2R)-2-phosphoglycerate = phosphoenolpyruvate + H2O. It functions in the pathway carbohydrate degradation; glycolysis; pyruvate from D-glyceraldehyde 3-phosphate: step 4/5. Its function is as follows. Catalyzes the reversible conversion of 2-phosphoglycerate (2-PG) into phosphoenolpyruvate (PEP). It is essential for the degradation of carbohydrates via glycolysis. The protein is Enolase of Thermosynechococcus vestitus (strain NIES-2133 / IAM M-273 / BP-1).